Here is a 340-residue protein sequence, read N- to C-terminus: L-threonine 3-dehydrogenase (340 aa).

Cysteine 38 contacts Zn(2+). Active-site charge relay system residues include threonine 40 and histidine 43. Zn(2+) is bound by residues histidine 63, glutamate 64, cysteine 93, cysteine 96, cysteine 99, and cysteine 107. NAD(+)-binding positions include isoleucine 175, aspartate 195, arginine 200, 261 to 263 (LGI), and 285 to 286 (IY).

It belongs to the zinc-containing alcohol dehydrogenase family. Homotetramer. The cofactor is Zn(2+).

It is found in the cytoplasm. The catalysed reaction is L-threonine + NAD(+) = (2S)-2-amino-3-oxobutanoate + NADH + H(+). It participates in amino-acid degradation; L-threonine degradation via oxydo-reductase pathway; glycine from L-threonine: step 1/2. Functionally, catalyzes the NAD(+)-dependent oxidation of L-threonine to 2-amino-3-ketobutyrate. This is L-threonine 3-dehydrogenase from Stenotrophomonas maltophilia (strain K279a).